The chain runs to 120 residues: Ribonuclease P protein component (120 aa).

Belongs to the RnpA family. Consists of a catalytic RNA component (M1 or rnpB) and a protein subunit.

It carries out the reaction Endonucleolytic cleavage of RNA, removing 5'-extranucleotides from tRNA precursor.. RNaseP catalyzes the removal of the 5'-leader sequence from pre-tRNA to produce the mature 5'-terminus. It can also cleave other RNA substrates such as 4.5S RNA. The protein component plays an auxiliary but essential role in vivo by binding to the 5'-leader sequence and broadening the substrate specificity of the ribozyme. This is Ribonuclease P protein component from Dictyoglomus thermophilum (strain ATCC 35947 / DSM 3960 / H-6-12).